Reading from the N-terminus, the 125-residue chain is Oxytocin-neurophysin 1 (125 aa).

The first 19 residues, 1 to 19 (MAGSSLACCLLGLLALTSA), serve as a signal peptide directing secretion. Cysteines 20 and 25 form a disulfide. Residue Gly28 is modified to Glycine amide. Cystine bridges form between Cys41-Cys85, Cys44-Cys58, Cys52-Cys75, Cys59-Cys65, Cys92-Cys104, Cys98-Cys116, and Cys105-Cys110.

It belongs to the vasopressin/oxytocin family. As to quaternary structure, interacts with oxytocin receptor (Ki=1.5 nM). Interacts with vasopressin V1aR/AVPR1A (Ki=37 nM), V1bR/AVPR1B (Ki=222 nM), and V2R/AVPR2 receptors (Ki=823 nM).

Its subcellular location is the secreted. Functionally, neurophysin 1 specifically binds oxytocin. Its function is as follows. Oxytocin causes contraction of the smooth muscle of the uterus and of the mammary gland. Acts by binding to oxytocin receptor (OXTR). In Bos taurus (Bovine), this protein is Oxytocin-neurophysin 1 (OXT).